Reading from the N-terminus, the 248-residue chain is Probable transcriptional regulatory protein Mchl_0946 (248 aa).

It belongs to the TACO1 family.

It is found in the cytoplasm. The chain is Probable transcriptional regulatory protein Mchl_0946 from Methylorubrum extorquens (strain CM4 / NCIMB 13688) (Methylobacterium extorquens).